We begin with the raw amino-acid sequence, 302 residues long: Short-chain dehydrogenase/reductase 3 (302 aa).

4 helical membrane-spanning segments follow: residues 9-29, 170-190, 195-215, and 253-273; these read LVVF…GLVL, IVCL…DYCT, AFAF…VSAT, and AVQL…LIIL. A substrate-binding site is contributed by serine 175. Catalysis depends on tyrosine 188, which acts as the Proton acceptor.

This sequence belongs to the short-chain dehydrogenases/reductases (SDR) family. As to expression, in the retina, expressed in cone but not rod outer segments.

The protein localises to the membrane. It carries out the reaction all-trans-retinol + NADP(+) = all-trans-retinal + NADPH + H(+). Catalyzes the reduction of all-trans-retinal to all-trans-retinol in the presence of NADPH. The polypeptide is Short-chain dehydrogenase/reductase 3 (DHRS3) (Bos taurus (Bovine)).